The following is a 305-amino-acid chain: tRNA dimethylallyltransferase (305 aa).

Residue 14-21 (GPTASGKS) coordinates ATP. Residue 16 to 21 (TASGKS) participates in substrate binding. Residues 39–42 (DSMQ) form an interaction with substrate tRNA region.

The protein belongs to the IPP transferase family. As to quaternary structure, monomer. The cofactor is Mg(2+).

The catalysed reaction is adenosine(37) in tRNA + dimethylallyl diphosphate = N(6)-dimethylallyladenosine(37) in tRNA + diphosphate. Its function is as follows. Catalyzes the transfer of a dimethylallyl group onto the adenine at position 37 in tRNAs that read codons beginning with uridine, leading to the formation of N6-(dimethylallyl)adenosine (i(6)A). The chain is tRNA dimethylallyltransferase from Bradyrhizobium sp. (strain BTAi1 / ATCC BAA-1182).